The primary structure comprises 881 residues: Serine/threonine-protein kinase/endoribonuclease IRE1b (881 aa).

An N-terminal signal peptide occupies residues 1–21 (MRGSALLDLILFLLVSPLAHS). Residues 22 to 357 (FKGSEISKFY…KQAGFASKFS (336 aa)) are Lumenal-facing. N-linked (GlcNAc...) asparagine glycosylation occurs at N115. The helical transmembrane segment at 358–378 (GLIVLIFGFCVTMLSVCGLFF) threads the bilayer. Topologically, residues 379–881 (YRLRQSIRIK…FFKYSKTTVF (503 aa)) are cytoplasmic. One can recognise a Protein kinase domain in the interval 459 to 744 (FVSNKEIAKG…AQDVMHHPLF (286 aa)). ATP-binding positions include 465–473 (IAKGSNGTV) and K487. The tract at residues 481 to 502 (GRLVAVKRLVQSHHDVAQKEIL) is ATP selon article. D608 (proton acceptor) is an active-site residue. A disordered region spans residues 642-661 (LTRNSTGLGSGSSGWQAPEQ). The KEN domain occupies 747–878 (SDMRLSFLRD…EEFFFKYSKT (132 aa)).

Belongs to the protein kinase superfamily. Ser/Thr protein kinase family. In terms of assembly, homodimer; disulfide-linked. Dimer formation is driven by hydrophobic interactions within the N-terminal luminal domains and stabilized by disulfide bridges. It depends on Mg(2+) as a cofactor. Post-translationally, autophosphorylated. Ubiquitous. Detected in the apical meristem, at leaf margins where vascular bundles end, in the anthers before pollen is formed and in the ovules at a very early stage of development. There is no expression in more mature embryos. Also strongly expressed in the cotyledons immediately after germination but not later on.

Its subcellular location is the endoplasmic reticulum membrane. It carries out the reaction L-seryl-[protein] + ATP = O-phospho-L-seryl-[protein] + ADP + H(+). The catalysed reaction is L-threonyl-[protein] + ATP = O-phospho-L-threonyl-[protein] + ADP + H(+). The kinase domain is activated by trans-autophosphorylation. Kinase activity is required for activation of the endoribonuclease domain. In terms of biological role, senses unfolded proteins in the lumen of the endoplasmic reticulum via its N-terminal domain which leads to enzyme auto-activation. The active endoribonuclease domain splices bZIP60 mRNA to generate a new C-terminus, converting it into a potent unfolded-protein response transcriptional activator which then induces transcription of UPR target genes. Involved in organ growth regulation. Plays a role in plant immunity and abiotic stress responses. Required for ER stress-induced autophagy. This chain is Serine/threonine-protein kinase/endoribonuclease IRE1b (IRE1B), found in Arabidopsis thaliana (Mouse-ear cress).